A 409-amino-acid polypeptide reads, in one-letter code: Isocitrate dehydrogenase [NADP] 1 (409 aa).

The NADP(+) site is built by lysine 75, threonine 78, threonine 80, and arginine 85. Mn(2+)-binding residues include aspartate 255, aspartate 278, and aspartate 282. Residues glycine 313, threonine 314, valine 315, histidine 318, and asparagine 331 each coordinate NADP(+).

The protein belongs to the isocitrate and isopropylmalate dehydrogenases family. Homodimer. Mg(2+) is required as a cofactor. The cofactor is Mn(2+).

The catalysed reaction is D-threo-isocitrate + NADP(+) = 2-oxoglutarate + CO2 + NADPH. Catalyzes the oxidative decarboxylation of isocitrate to 2-oxoglutarate and carbon dioxide with the concomitant reduction of NADP(+). The chain is Isocitrate dehydrogenase [NADP] 1 (icd) from Mycobacterium bovis (strain ATCC BAA-935 / AF2122/97).